The primary structure comprises 377 residues: Molybdenum import ATP-binding protein ModC (377 aa).

In terms of domain architecture, ABC transporter spans 17 to 254; sequence ITGDEAIRAR…LDLPFAHDED (238 aa). ATP is bound at residue 52 to 59; sequence GHSGSGKT. The Mop domain maps to 313 to 377; the sequence is DSSILNVLPA…AQVKGVALLR (65 aa).

This sequence belongs to the ABC transporter superfamily. Molybdate importer (TC 3.A.1.8) family. The complex is composed of two ATP-binding proteins (ModC), two transmembrane proteins (ModB) and a solute-binding protein (ModA).

It localises to the cell inner membrane. The catalysed reaction is molybdate(out) + ATP + H2O = molybdate(in) + ADP + phosphate + H(+). In terms of biological role, part of the ABC transporter complex ModABC involved in molybdenum import. Responsible for energy coupling to the transport system. This is Molybdenum import ATP-binding protein ModC from Aromatoleum aromaticum (strain DSM 19018 / LMG 30748 / EbN1) (Azoarcus sp. (strain EbN1)).